Reading from the N-terminus, the 312-residue chain is Bifunctional pinoresinol-lariciresinol reductase (312 aa).

NADP(+) is bound by residues 10–16 (GGTGYIG), Arg35, and Lys44. Lys136 (proton acceptor) is an active-site residue. Arg140 contributes to the NADP(+) binding site. His268 lines the substrate pocket.

This sequence belongs to the NmrA-type oxidoreductase family. Isoflavone reductase subfamily. Dimer. Expressed in seed coats, but not in embryos, leaves, stems and roots.

Its function is as follows. Reductase involved in lignan biosynthesis. Catalyzes the sequential conversion of pinoresinol into lariciresinol and of lariciresinol into secoisolariciresinol. Abstracts the 4R-hydride from the NADPH cofactor during catalysis. In Linum usitatissimum (Flax), this protein is Bifunctional pinoresinol-lariciresinol reductase.